The following is a 271-amino-acid chain: Phosphate import ATP-binding protein PstB 2 (271 aa).

The tract at residues 1-20 is disordered; the sequence is MLTKKPEINTILQTTPDPHS. The region spanning 25-266 is the ABC transporter domain; sequence MATEDLHVYY…PQEKQTEDYI (242 aa). 57–64 provides a ligand contact to ATP; sequence GPSGCGKS.

It belongs to the ABC transporter superfamily. Phosphate importer (TC 3.A.1.7) family. The complex is composed of two ATP-binding proteins (PstB), two transmembrane proteins (PstC and PstA) and a solute-binding protein (PstS).

It is found in the cell membrane. It carries out the reaction phosphate(out) + ATP + H2O = ADP + 2 phosphate(in) + H(+). In terms of biological role, part of the ABC transporter complex PstSACB involved in phosphate import. Responsible for energy coupling to the transport system. This is Phosphate import ATP-binding protein PstB 2 from Listeria innocua serovar 6a (strain ATCC BAA-680 / CLIP 11262).